The following is a 2512-amino-acid chain: Isonitrile lipopeptide synthase (2512 aa).

2 consecutive Carrier domains span residues 935–1003 and 1984–2059; these read AAGL…PTPD and APAG…GRDA. Residues Ser-963 and Ser-2019 each carry the O-(pantetheine 4'-phosphoryl)serine modification. Residues 2112 to 2372 enclose the Thioester reductase (TE) domain; the sequence is LTGATGFLGR…LPVTFVAEAI (261 aa).

Belongs to the ATP-dependent AMP-binding enzyme family. Pantetheine 4'-phosphate serves as cofactor.

The catalysed reaction is 2 a (3R)-3-isocyanyl-fatty acyl-[ACP] + L-lysine + ATP + 2 NADPH = an isonitrile lipopeptide + 2 holo-[ACP] + AMP + diphosphate + 2 NADP(+). Its function is as follows. Nonribosomal peptide synthetase (NRPS) involved in the biosynthesis of a unique class of isonitrile lipopeptides (INLPs) that seem to function as virulence factors in M.tuberculosis and to play a role in metal acquisition. Catalyzes the final step in the pathway, i.e. the condensation of a (3R)-3-isocyanyl-fatty acyl-[ACP] to both amino groups of a lysine, producing isonitrile lipopeptides. In Mycobacterium tuberculosis (strain ATCC 25618 / H37Rv), this protein is Isonitrile lipopeptide synthase.